Here is a 217-residue protein sequence, read N- to C-terminus: Kunitz-type trypsin inhibitor-like 1 protein (217 aa).

An N-terminal signal peptide occupies residues 1–26 (MKPLSPLTLSFFLFVFITNLSLAFSN). 2 disulfides stabilise this stretch: Cys-70/Cys-115 and Cys-168/Cys-175. A glycan (N-linked (GlcNAc...) asparagine) is linked at Asn-191.

It belongs to the protease inhibitor I3 (leguminous Kunitz-type inhibitor) family. In terms of tissue distribution, expressed in roots, leaves, epidermal layers of elongating stems, meristems and in the vascular system.

It localises to the secreted. In terms of biological role, might act as a protease inhibitor involved in plant defense responses. The protein is Kunitz-type trypsin inhibitor-like 1 protein (PIP20-1) of Pisum sativum (Garden pea).